A 450-amino-acid polypeptide reads, in one-letter code: C4-dicarboxylate transport protein (450 aa).

Transmembrane regions (helical) follow at residues 25–45 (VVFA…YGAA), 56–76 (LIKM…IASM), 90–110 (MAYF…VANV), 162–182 (ILQV…VGDA), 200–220 (LVNI…AFTI), 234–254 (LVLT…GAVA), 319–339 (IYMT…LTLG), and 367–387 (AATL…ILGV).

The protein belongs to the dicarboxylate/amino acid:cation symporter (DAACS) (TC 2.A.23) family.

Its subcellular location is the cell inner membrane. In terms of biological role, responsible for the transport of dicarboxylates such as succinate, fumarate, and malate from the periplasm across the membrane. This is C4-dicarboxylate transport protein from Acidovorax sp. (strain JS42).